A 420-amino-acid chain; its full sequence is Protein Rv2184c (420 aa).

This sequence belongs to the arsA ATPase family.

The polypeptide is Protein Rv2184c (Mycobacterium tuberculosis (strain ATCC 25618 / H37Rv)).